The following is a 341-amino-acid chain: NADH-ubiquinone oxidoreductase chain 2 (341 aa).

Transmembrane regions (helical) follow at residues 8-28 (IFLIMLIFGTLVTISSNSWLG), 61-81 (FLTQAFASSILLFAIIMLMFL), 95-115 (ILILSTLLLKSGAAPFHFWFP), 145-165 (FIYNFFMISIILSMLIGSLGG), 174-191 (LMAFSSINHLGWMLLAMM), 195-215 (MLWMTYFLMYSLLSFSIVLMF), 238-258 (LLIFLNLLSLGGLPPFLGFLP), 272-292 (LFILTISVCLTLITLYFYLRL), and 321-341 (LIFNFISIGGLVMISMIYIIM).

It belongs to the complex I subunit 2 family.

It localises to the mitochondrion inner membrane. It catalyses the reaction a ubiquinone + NADH + 5 H(+)(in) = a ubiquinol + NAD(+) + 4 H(+)(out). Its function is as follows. Core subunit of the mitochondrial membrane respiratory chain NADH dehydrogenase (Complex I) that is believed to belong to the minimal assembly required for catalysis. Complex I functions in the transfer of electrons from NADH to the respiratory chain. The immediate electron acceptor for the enzyme is believed to be ubiquinone. This is NADH-ubiquinone oxidoreductase chain 2 (mt:ND2) from Anopheles gambiae (African malaria mosquito).